The following is a 552-amino-acid chain: Antibiotic resistance protein MAB_2355c (552 aa).

ABC transporter domains lie at 4–270 and 332–552; these read VQLD…RRWD and AKRA…PQWV. Residues 37-44 and 364-371 contribute to the ATP site; these read GPNGTGKT and GGNGTGKS.

This sequence belongs to the ABC transporter superfamily. ABCF family.

It catalyses the reaction ATP + H2O = ADP + phosphate + H(+). The ATPase activity can be inhibited by ribosome-targeting antibiotics. In terms of biological role, exhibits ATP hydrolysis activity and contributes to macrolide resistance by ribosome protection. Can also hydrolyze GTP, TTP and CTP but to a lesser extent than ATP. In vitro, rescues the transcription and translation activities affected by macrolides. Increased expression correlates with increased resistance to clarithromycin, one of the main drugs used to treat M.abscessus. This chain is Antibiotic resistance protein MAB_2355c, found in Mycobacteroides abscessus (strain ATCC 19977 / DSM 44196 / CCUG 20993 / CIP 104536 / JCM 13569 / NCTC 13031 / TMC 1543 / L948) (Mycobacterium abscessus).